The primary structure comprises 465 residues: Serine hydroxymethyltransferase (465 aa).

At Lys241 the chain carries N6-(pyridoxal phosphate)lysine.

The protein belongs to the SHMT family. Homotetramer. Pyridoxal 5'-phosphate is required as a cofactor. As to expression, highest expression in the ovary and testis. 6- to 7-fold lower expression in hemocyte, silk gland, midgut and fat body.

The catalysed reaction is (6R)-5,10-methylene-5,6,7,8-tetrahydrofolate + glycine + H2O = (6S)-5,6,7,8-tetrahydrofolate + L-serine. The protein operates within one-carbon metabolism; tetrahydrofolate interconversion. Interconversion of serine and glycine. This is Serine hydroxymethyltransferase (692975) from Bombyx mori (Silk moth).